Here is a 154-residue protein sequence, read N- to C-terminus: RISGIGKAGNPDVQPNVDIVIGPGTEVVAGEGKIVTAGGIDTHIHFICPQQAEEGLCSGLTTFIGGGTGPVAGSNATTVTPGVWNMSRMLEAVDDLPINVGLFGKGCVSKPEALREQIEAGAVGLKLHEDWGATPAAINNCMNVADEMDIQVAI.

The 117-residue stretch at 38–154 (GGIDTHIHFI…ADEMDIQVAI (117 aa)) folds into the Urease domain. Ni(2+) contacts are provided by His43, His45, and Lys126. Lys126 bears the N6-carboxylysine mark. His128 contributes to the substrate binding site.

This sequence belongs to the metallo-dependent hydrolases superfamily. Urease alpha subunit family. As to quaternary structure, heterotrimer of UreA (gamma), UreB (beta) and UreC (alpha) subunits. Three heterotrimers associate to form the active enzyme. Requires Ni cation as cofactor. In terms of processing, carboxylation allows a single lysine to coordinate two nickel ions.

The protein localises to the cytoplasm. The catalysed reaction is urea + 2 H2O + H(+) = hydrogencarbonate + 2 NH4(+). Its pathway is nitrogen metabolism; urea degradation; CO(2) and NH(3) from urea (urease route): step 1/1. The polypeptide is Urease subunit alpha (ureC) (Photobacterium damselae subsp. damselae (Listonella damsela)).